The following is a 666-amino-acid chain: Protein translocase subunit SecA 2 (666 aa).

ATP-binding positions include glutamine 119, 137 to 141 (GEGKS), and aspartate 546.

Belongs to the SecA family. Monomer and homodimer. Part of the essential Sec protein translocation apparatus which comprises SecA, SecYEG and auxiliary proteins SecDF-YajC and YidC.

It is found in the cell inner membrane. The protein resides in the cytoplasm. It carries out the reaction ATP + H2O + cellular proteinSide 1 = ADP + phosphate + cellular proteinSide 2.. Functionally, part of the Sec protein translocase complex. Interacts with the SecYEG preprotein conducting channel. Has a central role in coupling the hydrolysis of ATP to the transfer of proteins into and across the cell membrane, serving both as a receptor for the preprotein-SecB complex and as an ATP-driven molecular motor driving the stepwise translocation of polypeptide chains across the membrane. This is Protein translocase subunit SecA 2 from Nitrosospira multiformis (strain ATCC 25196 / NCIMB 11849 / C 71).